The chain runs to 519 residues: Membrane-bound lytic murein transglycosylase F (519 aa).

The N-terminal stretch at 1–32 is a signal peptide; that stretch reads MKKLKLNYLLIGVVTLLLAVALWPAIPWSGKA. The tract at residues 33–269 is non-LT domain; it reads DNRIAAIQAR…RLEEKYLGHG (237 aa). Residues 270–519 form an LT domain region; the sequence is NDFDYVDTRS…PNTLSPVSPR (250 aa). Glu314 is an active-site residue. A disordered region spans residues 495–519; that stretch reads PFSQAGAGGKTHSALPNTLSPVSPR. A compositionally biased stretch (polar residues) spans 508 to 519; it reads ALPNTLSPVSPR.

This sequence in the N-terminal section; belongs to the bacterial solute-binding protein 3 family. It in the C-terminal section; belongs to the transglycosylase Slt family.

Its subcellular location is the cell outer membrane. The catalysed reaction is Exolytic cleavage of the (1-&gt;4)-beta-glycosidic linkage between N-acetylmuramic acid (MurNAc) and N-acetylglucosamine (GlcNAc) residues in peptidoglycan, from either the reducing or the non-reducing ends of the peptidoglycan chains, with concomitant formation of a 1,6-anhydrobond in the MurNAc residue.. Functionally, murein-degrading enzyme that degrades murein glycan strands and insoluble, high-molecular weight murein sacculi, with the concomitant formation of a 1,6-anhydromuramoyl product. Lytic transglycosylases (LTs) play an integral role in the metabolism of the peptidoglycan (PG) sacculus. Their lytic action creates space within the PG sacculus to allow for its expansion as well as for the insertion of various structures such as secretion systems and flagella. In Cronobacter sakazakii (strain ATCC BAA-894) (Enterobacter sakazakii), this protein is Membrane-bound lytic murein transglycosylase F.